The primary structure comprises 424 residues: Putative chloroquine resistance transporter (424 aa).

Residues 1–56 (MTGMKKGKNKKKNVKNDERYKELDSLISNDSEIGNNSRWGGAKRICKLIGNEMRNN) lie on the Cytoplasmic side of the membrane. The helical transmembrane segment at 57–77 (IYVYLLSILYLCVSVMNKVFS) threads the bilayer. Over 78-88 (KRTLNKIGNYS) the chain is Vacuolar. A glycan (N-linked (GlcNAc...) asparagine) is linked at Asn86. Residues 89–109 (FVTSEVHNMICTIVFQLLYFI) form a helical membrane-spanning segment. The Cytoplasmic portion of the chain corresponds to 110–125 (YRKTSNPASRNESQKN). The chain crosses the membrane as a helical span at residues 126-146 (FGWQFFLISLLDASTVIITMI). Over 147-156 (GLTRTTGNIQ) the chain is Vacuolar. The chain crosses the membrane as a helical span at residues 157–177 (SFIMQLIIPVNMYFCFIFLGY). Topologically, residues 178–180 (RYH) are cytoplasmic. The chain crosses the membrane as a helical span at residues 181–201 (LFNYLGAFIILITIAAVETVL). Residues 202–209 (SYETQSDN) lie on the Vacuolar side of the membrane. A helical membrane pass occupies residues 210-230 (SIIFNLIMIFALIPLSFSNMT). Residues 231 to 248 (REVVFKKHKINIIRLNAM) are Cytoplasmic-facing. Residues 249–269 (VALFQFFTSLLVLPVYNISFL) form a helical membrane-spanning segment. Residues 270-317 (KEIYMPFSEMGTNINDGLRCLFYGQSTIVENCGVGMVKMCDQCEGAWK) are Vacuolar-facing. 2 disulfides stabilise this stretch: Cys289-Cys312 and Cys301-Cys309. A helical membrane pass occupies residues 318–338 (TFITYSFFNICDNLLVCYIID). Over 339 to 346 (KFSTMTYT) the chain is Cytoplasmic. Residues 347–367 (IVSCIQGPAITIAYYFKFLAG) form a helical membrane-spanning segment. Topologically, residues 368-377 (DVVRQPRLLD) are vacuolar. The helical transmembrane segment at 378–398 (FLTLFGYLLGTIIYRIGNIIL) threads the bilayer. Topologically, residues 399 to 424 (EKKKMLKALNTDGSEAELTSIETSTA) are cytoplasmic.

The protein belongs to the CRT-like transporter family.

The protein resides in the vacuole membrane. In terms of biological role, nutrient transporter. Involved in maintaining the osmotic homeostasis of the digestive vacuole. The sequence is that of Putative chloroquine resistance transporter from Plasmodium chabaudi.